The following is a 196-amino-acid chain: Molybdenum cofactor guanylyltransferase (196 aa).

Residues 14-16, Lys27, Asp73, and Asp106 contribute to the GTP site; that span reads LAG. Asp106 provides a ligand contact to Mg(2+).

The protein belongs to the MobA family. As to quaternary structure, monomer. Mg(2+) is required as a cofactor.

It localises to the cytoplasm. It carries out the reaction Mo-molybdopterin + GTP + H(+) = Mo-molybdopterin guanine dinucleotide + diphosphate. In terms of biological role, transfers a GMP moiety from GTP to Mo-molybdopterin (Mo-MPT) cofactor (Moco or molybdenum cofactor) to form Mo-molybdopterin guanine dinucleotide (Mo-MGD) cofactor. In Acidiphilium cryptum (strain JF-5), this protein is Molybdenum cofactor guanylyltransferase.